Consider the following 328-residue polypeptide: Cytochrome c biogenesis protein CcsA (328 aa).

The next 8 membrane-spanning stretches (helical) occupy residues 15–35, 36–56, 68–88, 97–117, 142–162, 236–256, 263–283, and 297–317; these read FLVLFLTMLVYWAGAAFPSIP, LLPGLGSTGVAIANLCIAALL, ISNLYESLFFLAWGVTAVHLI, LVGVVTTPVAMGITAFATLSL, VMMLSYAALMVGSLMAIAFLI, VIGLGFPLLTIGIIAGAVWAN, WSWDPKETWALITWLVFAAYL, and AILAASGFVVVWVCYLGVNLL.

Belongs to the CcmF/CycK/Ccl1/NrfE/CcsA family. As to quaternary structure, may interact with ccs1.

Its subcellular location is the cellular thylakoid membrane. Functionally, required during biogenesis of c-type cytochromes (cytochrome c6 and cytochrome f) at the step of heme attachment. This Microcystis aeruginosa (strain NIES-843 / IAM M-2473) protein is Cytochrome c biogenesis protein CcsA.